The primary structure comprises 590 residues: Cytosolic Fe-S cluster assembly factor nar1 (590 aa).

Cysteine 20, cysteine 62, cysteine 65, cysteine 68, cysteine 214, cysteine 269, cysteine 456, and cysteine 460 together coordinate [4Fe-4S] cluster.

The protein belongs to the NARF family.

Functionally, component of the cytosolic Fe/S protein assembly machinery. Required for maturation of extramitochondrial Fe/S proteins. May play a role in the transfer of pre-assembled Fe/S clusters to target apoproteins. This chain is Cytosolic Fe-S cluster assembly factor nar1 (nar1), found in Talaromyces marneffei (strain ATCC 18224 / CBS 334.59 / QM 7333) (Penicillium marneffei).